We begin with the raw amino-acid sequence, 457 residues long: Ribosomal protein uS12 methylthiotransferase RimO (457 aa).

Residues 9–128 form the MTTase N-terminal domain; sequence KKVHFISLGC…ILKNSDEGEK (120 aa). [4Fe-4S] cluster is bound by residues cysteine 18, cysteine 54, cysteine 88, cysteine 163, cysteine 167, and cysteine 170. In terms of domain architecture, Radical SAM core spans 149–384; sequence SQPGHRAYLK…MEVQQNISRE (236 aa). Residues 387–455 form the TRAM domain; the sequence is SDFVGKTLQV…EYDLIGEIVV (69 aa).

It belongs to the methylthiotransferase family. RimO subfamily. [4Fe-4S] cluster serves as cofactor.

It localises to the cytoplasm. The enzyme catalyses L-aspartate(89)-[ribosomal protein uS12]-hydrogen + (sulfur carrier)-SH + AH2 + 2 S-adenosyl-L-methionine = 3-methylsulfanyl-L-aspartate(89)-[ribosomal protein uS12]-hydrogen + (sulfur carrier)-H + 5'-deoxyadenosine + L-methionine + A + S-adenosyl-L-homocysteine + 2 H(+). In terms of biological role, catalyzes the methylthiolation of an aspartic acid residue of ribosomal protein uS12. This is Ribosomal protein uS12 methylthiotransferase RimO from Bdellovibrio bacteriovorus (strain ATCC 15356 / DSM 50701 / NCIMB 9529 / HD100).